We begin with the raw amino-acid sequence, 93 residues long: Small ribosomal subunit protein bS20 (93 aa).

The disordered stretch occupies residues K72–S93. Over residues T74 to R84 the composition is skewed to basic residues.

It belongs to the bacterial ribosomal protein bS20 family.

Binds directly to 16S ribosomal RNA. The protein is Small ribosomal subunit protein bS20 of Carboxydothermus hydrogenoformans (strain ATCC BAA-161 / DSM 6008 / Z-2901).